A 220-amino-acid polypeptide reads, in one-letter code: MHSRLATARLYLCTDARRERGDLADFADAALAGGVDIIQLRDKGSAGEQRFGPLEARDELAACEILADAAARHAAMFAVNDRADIARAARADVLHLGQRDLPVDVARAITGPATLIGQSTHDRDQVSAAAIGAVDYFCVGPCWPTPTKPGRTAPGLDLVRFAADVAGAKPWFAIGGIDGLRLPEVLAAGARRIVVVRAITAADDPREAAAKLKSELLAAI.

Residues 39–43 (QLRDK) and N80 each bind 4-amino-2-methyl-5-(diphosphooxymethyl)pyrimidine. Residues D81 and D100 each coordinate Mg(2+). S119 lines the 4-amino-2-methyl-5-(diphosphooxymethyl)pyrimidine pocket. Position 145 to 147 (145 to 147 (TPT)) interacts with 2-[(2R,5Z)-2-carboxy-4-methylthiazol-5(2H)-ylidene]ethyl phosphate. K148 is a 4-amino-2-methyl-5-(diphosphooxymethyl)pyrimidine binding site. Residue G176 coordinates 2-[(2R,5Z)-2-carboxy-4-methylthiazol-5(2H)-ylidene]ethyl phosphate.

Belongs to the thiamine-phosphate synthase family. It depends on Mg(2+) as a cofactor.

It catalyses the reaction 2-[(2R,5Z)-2-carboxy-4-methylthiazol-5(2H)-ylidene]ethyl phosphate + 4-amino-2-methyl-5-(diphosphooxymethyl)pyrimidine + 2 H(+) = thiamine phosphate + CO2 + diphosphate. The catalysed reaction is 2-(2-carboxy-4-methylthiazol-5-yl)ethyl phosphate + 4-amino-2-methyl-5-(diphosphooxymethyl)pyrimidine + 2 H(+) = thiamine phosphate + CO2 + diphosphate. The enzyme catalyses 4-methyl-5-(2-phosphooxyethyl)-thiazole + 4-amino-2-methyl-5-(diphosphooxymethyl)pyrimidine + H(+) = thiamine phosphate + diphosphate. The protein operates within cofactor biosynthesis; thiamine diphosphate biosynthesis; thiamine phosphate from 4-amino-2-methyl-5-diphosphomethylpyrimidine and 4-methyl-5-(2-phosphoethyl)-thiazole: step 1/1. Its function is as follows. Condenses 4-methyl-5-(beta-hydroxyethyl)thiazole monophosphate (THZ-P) and 2-methyl-4-amino-5-hydroxymethyl pyrimidine pyrophosphate (HMP-PP) to form thiamine monophosphate (TMP). The sequence is that of Thiamine-phosphate synthase from Mycobacterium ulcerans (strain Agy99).